The primary structure comprises 410 residues: Chorismate synthase (410 aa).

The NADP(+) site is built by R43 and R49. FMN is bound by residues R143–S145, Q264–A265, G308, K323–T327, and R349.

It belongs to the chorismate synthase family. Homotetramer. It depends on FMNH2 as a cofactor.

It carries out the reaction 5-O-(1-carboxyvinyl)-3-phosphoshikimate = chorismate + phosphate. It functions in the pathway metabolic intermediate biosynthesis; chorismate biosynthesis; chorismate from D-erythrose 4-phosphate and phosphoenolpyruvate: step 7/7. Its function is as follows. Catalyzes the anti-1,4-elimination of the C-3 phosphate and the C-6 proR hydrogen from 5-enolpyruvylshikimate-3-phosphate (EPSP) to yield chorismate, which is the branch point compound that serves as the starting substrate for the three terminal pathways of aromatic amino acid biosynthesis. This reaction introduces a second double bond into the aromatic ring system. The protein is Chorismate synthase of Corynebacterium glutamicum (strain ATCC 13032 / DSM 20300 / JCM 1318 / BCRC 11384 / CCUG 27702 / LMG 3730 / NBRC 12168 / NCIMB 10025 / NRRL B-2784 / 534).